Reading from the N-terminus, the 382-residue chain is Protein RecA (382 aa).

79–86 (GPESSGKT) provides a ligand contact to ATP.

This sequence belongs to the RecA family.

The protein resides in the cytoplasm. Functionally, can catalyze the hydrolysis of ATP in the presence of single-stranded DNA, the ATP-dependent uptake of single-stranded DNA by duplex DNA, and the ATP-dependent hybridization of homologous single-stranded DNAs. It interacts with LexA causing its activation and leading to its autocatalytic cleavage. In Streptococcus sanguinis (strain SK36), this protein is Protein RecA.